Here is a 97-residue protein sequence, read N- to C-terminus: Aspartyl/glutamyl-tRNA(Asn/Gln) amidotransferase subunit C (97 aa).

The protein belongs to the GatC family. As to quaternary structure, heterotrimer of A, B and C subunits.

It carries out the reaction L-glutamyl-tRNA(Gln) + L-glutamine + ATP + H2O = L-glutaminyl-tRNA(Gln) + L-glutamate + ADP + phosphate + H(+). The enzyme catalyses L-aspartyl-tRNA(Asn) + L-glutamine + ATP + H2O = L-asparaginyl-tRNA(Asn) + L-glutamate + ADP + phosphate + 2 H(+). Its function is as follows. Allows the formation of correctly charged Asn-tRNA(Asn) or Gln-tRNA(Gln) through the transamidation of misacylated Asp-tRNA(Asn) or Glu-tRNA(Gln) in organisms which lack either or both of asparaginyl-tRNA or glutaminyl-tRNA synthetases. The reaction takes place in the presence of glutamine and ATP through an activated phospho-Asp-tRNA(Asn) or phospho-Glu-tRNA(Gln). In Synechococcus sp. (strain JA-2-3B'a(2-13)) (Cyanobacteria bacterium Yellowstone B-Prime), this protein is Aspartyl/glutamyl-tRNA(Asn/Gln) amidotransferase subunit C.